The following is an 81-amino-acid chain: MRLVVCLVFLASFALVCQGQVYKGGYTRPVPRPPFVRPLPGGPIGPYNGCPVSCRGISFSQARSCCSRLGRCCHVGKGYSG.

A signal peptide spans 1-19; that stretch reads MRLVVCLVFLASFALVCQG. Position 20 is a pyrrolidone carboxylic acid (Gln-20). 3 disulfide bridges follow: Cys-50/Cys-65, Cys-54/Cys-72, and Cys-66/Cys-73. Ser-80 carries the serine amide modification.

This sequence belongs to the penaeidin family.

Its subcellular location is the cytoplasmic granule. Functionally, antibacterial and antifungal activity. Presents chitin-binding activity. The protein is Penaeidin-3j of Penaeus vannamei (Whiteleg shrimp).